The chain runs to 317 residues: NADPH-dependent D-xylose reductase (317 aa).

The active-site Proton donor is the Tyr-47. His-109 contributes to the substrate binding site. Residues 164–165 (SN), 213–222 (SSFGPQSFVE), and 269–279 (KSNNPDRLLSN) contribute to the NADP(+) site.

The protein belongs to the aldo/keto reductase family.

The enzyme catalyses xylitol + NAD(+) = D-xylose + NADH + H(+). It carries out the reaction xylitol + NADP(+) = D-xylose + NADPH + H(+). The protein operates within carbohydrate metabolism; D-xylose degradation. Its function is as follows. Reduces D-xylose into xylitol. Preferentially utilizes NADPH as a cosubstrate. The protein is NADPH-dependent D-xylose reductase (XYL1) of Meyerozyma guilliermondii (strain ATCC 6260 / CBS 566 / DSM 6381 / JCM 1539 / NBRC 10279 / NRRL Y-324) (Yeast).